Here is a 209-residue protein sequence, read N- to C-terminus: Uracil phosphoribosyltransferase (209 aa).

5-phospho-alpha-D-ribose 1-diphosphate-binding positions include Arg79, Arg104, and 131 to 139; that span reads DPLLATGNS. Uracil-binding positions include Ile194 and 199 to 201; that span reads GDA. Residue Asp200 coordinates 5-phospho-alpha-D-ribose 1-diphosphate.

This sequence belongs to the UPRTase family. It depends on Mg(2+) as a cofactor.

The enzyme catalyses UMP + diphosphate = 5-phospho-alpha-D-ribose 1-diphosphate + uracil. It participates in pyrimidine metabolism; UMP biosynthesis via salvage pathway; UMP from uracil: step 1/1. With respect to regulation, allosterically activated by GTP. Its function is as follows. Catalyzes the conversion of uracil and 5-phospho-alpha-D-ribose 1-diphosphate (PRPP) to UMP and diphosphate. In Rhodococcus opacus (strain B4), this protein is Uracil phosphoribosyltransferase.